The primary structure comprises 324 residues: NADH-ubiquinone oxidoreductase chain 1 (324 aa).

9 helical membrane-spanning segments follow: residues 9 to 29 (ILNP…LTLL), 43 to 63 (PNIV…KLFI), 75 to 95 (ILFI…WAPL), 106 to 126 (LAIL…LGSG), 146 to 166 (ISYE…TGGF), 177 to 197 (SIWL…STLA), 228 to 250 (LFFL…LFLG), 259 to 279 (ELTT…FLWV), and 299 to 319 (FLPL…TFAG).

This sequence belongs to the complex I subunit 1 family.

The protein resides in the mitochondrion inner membrane. The enzyme catalyses a ubiquinone + NADH + 5 H(+)(in) = a ubiquinol + NAD(+) + 4 H(+)(out). Its function is as follows. Core subunit of the mitochondrial membrane respiratory chain NADH dehydrogenase (Complex I) that is believed to belong to the minimal assembly required for catalysis. Complex I functions in the transfer of electrons from NADH to the respiratory chain. The immediate electron acceptor for the enzyme is believed to be ubiquinone. This Tetraodon nigroviridis (Spotted green pufferfish) protein is NADH-ubiquinone oxidoreductase chain 1 (MT-ND1).